We begin with the raw amino-acid sequence, 124 residues long: MPTIQQLVRKGRQAKASKTKTPALKGSPQRRGVCTRVYTTTPKKPNSALRKVARVRLTSGVEVTAYIPGVGHNLQEHSIVLVRGGRVKDLPGVRYKIIRGSLDTQGVRNRKQGRSRYGAKKEKS.

The segment at 1–32 (MPTIQQLVRKGRQAKASKTKTPALKGSPQRRG) is disordered. Over residues 9–18 (RKGRQAKASK) the composition is skewed to basic residues. The residue at position 89 (Asp89) is a 3-methylthioaspartic acid.

Belongs to the universal ribosomal protein uS12 family. Part of the 30S ribosomal subunit. Contacts proteins S8 and S17. May interact with IF1 in the 30S initiation complex.

Its function is as follows. With S4 and S5 plays an important role in translational accuracy. Functionally, interacts with and stabilizes bases of the 16S rRNA that are involved in tRNA selection in the A site and with the mRNA backbone. Located at the interface of the 30S and 50S subunits, it traverses the body of the 30S subunit contacting proteins on the other side and probably holding the rRNA structure together. The combined cluster of proteins S8, S12 and S17 appears to hold together the shoulder and platform of the 30S subunit. The sequence is that of Small ribosomal subunit protein uS12 from Acidothermus cellulolyticus (strain ATCC 43068 / DSM 8971 / 11B).